The following is a 207-amino-acid chain: Outer-membrane lipoprotein carrier protein (207 aa).

Residues 1–21 (MRLIRMLLATALTFSVIPAHA) form the signal peptide.

Belongs to the LolA family. Monomer.

It is found in the periplasm. Functionally, participates in the translocation of lipoproteins from the inner membrane to the outer membrane. Only forms a complex with a lipoprotein if the residue after the N-terminal Cys is not an aspartate (The Asp acts as a targeting signal to indicate that the lipoprotein should stay in the inner membrane). The chain is Outer-membrane lipoprotein carrier protein from Pseudomonas syringae pv. tomato (strain ATCC BAA-871 / DC3000).